A 485-amino-acid polypeptide reads, in one-letter code: Podocalyxin (485 aa).

Residues 1–24 (MRPTLALSALLLLQLLLLSTPSLS) form the signal peptide. Positions 22 to 267 (SLSQDNGNKT…STPSSTWTSG (246 aa)) are disordered. Over 25-386 (QDNGNKTDTS…PPEVNEDRFS (362 aa)) the chain is Extracellular. Over residues 26-57 (DNGNKTDTSDITSIDQNQDKPATNQPSNATPK) the composition is skewed to polar residues. N-linked (GlcNAc...) asparagine glycans are attached at residues asparagine 29 and asparagine 82. Residues 58–109 (SSVQPPTPTSISTSSPDPKATQSSNSSVTTTSDSTTDRTSSSTSTVPTTSNS) show a composition bias toward low complexity. Composition is skewed to polar residues over residues 110–128 (GQTV…TALP) and 135–149 (NASS…STKL). Residues asparagine 135, asparagine 144, and asparagine 156 are each glycosylated (N-linked (GlcNAc...) asparagine). A compositionally biased stretch (low complexity) spans 150-161 (PSTPTTNSTASP). Composition is skewed to polar residues over residues 163–176 (QPVS…TTVQ), 186–228 (DNTT…QPTG), and 235–253 (SVPT…TPVV). Asparagine 187 carries an N-linked (GlcNAc...) asparagine glycan. A compositionally biased stretch (low complexity) spans 254-267 (SQGPSTPSSTWTSG). N-linked (GlcNAc...) asparagine glycosylation is present at asparagine 287. Residues 387–407 (LPLIITIVCMASFLLLVAALY) form a helical membrane-spanning segment. At 408–485 (GCCHQRISQR…DLDEEEDTHL (78 aa)) the chain is on the cytoplasmic side. Position 445 is a phosphothreonine (threonine 445). Residue serine 464 is modified to Phosphoserine. At threonine 483 the chain carries Phosphothreonine.

Belongs to the podocalyxin family. As to quaternary structure, monomer; when associated with the membrane raft. Oligomer; when integrated in the apical membrane. Interacts with NHERF2. Interacts (via the C-terminal PDZ-binding motif DTHL) with NHERF1 (via the PDZ domains); the interaction take place early in the secretory pathway and is necessary for its apical membrane sorting. Found in a complex with EZR, PODXL and NHERF2. Associates with the actin cytoskeleton through complex formation with EZR and NHERF2. Interacts (via the C-terminal PDZ-binding motif DTHL) with NHERF1 (via the PDZ domains); interaction is not detected in glomerular epithelium cells. Interacts (via the C-terminal PDZ-binding motif DTHL) with NHERF2 (via the PDZ 1 domain); interaction is detected in glomerular epithelium cells. Interacts with EZR. N- and O-linked glycosylated. Sialoglycoprotein. As to expression, glomerular epithelium cell (podocyte) (at protein level).

Its subcellular location is the apical cell membrane. It is found in the cell projection. The protein resides in the microvillus. The protein localises to the membrane raft. It localises to the lamellipodium. Its subcellular location is the filopodium. It is found in the ruffle. The protein resides in the membrane. Functionally, involved in the regulation of both adhesion and cell morphology and cancer progression. Functions as an anti-adhesive molecule that maintains an open filtration pathway between neighboring foot processes in the podocyte by charge repulsion. Acts as a pro-adhesive molecule, enhancing the adherence of cells to immobilized ligands, increasing the rate of migration and cell-cell contacts in an integrin-dependent manner. Induces the formation of apical actin-dependent microvilli. Involved in the formation of a preapical plasma membrane subdomain to set up initial epithelial polarization and the apical lumen formation during renal tubulogenesis. Plays a role in cancer development and aggressiveness by inducing cell migration and invasion through its interaction with the actin-binding protein EZR. Affects EZR-dependent signaling events, leading to increased activities of the MAPK and PI3K pathways in cancer cells. The polypeptide is Podocalyxin (Podxl) (Rattus norvegicus (Rat)).